The chain runs to 360 residues: Phospho-N-acetylmuramoyl-pentapeptide-transferase (360 aa).

Transmembrane regions (helical) follow at residues 21–41 (YLSF…LWMG), 73–93 (TMGG…WADL), 94–114 (TNPY…VGFV), 132–152 (WKYF…YAHG), 168–188 (VMPQ…VGTS), 199–219 (GLAI…AWAT), 239–259 (LVVV…FNTY), 263–283 (VFMG…IAVL), 288–308 (FVLV…ILQV), and 338–358 (VIVR…ATLK).

The protein belongs to the glycosyltransferase 4 family. MraY subfamily. Mg(2+) serves as cofactor.

The protein localises to the cell inner membrane. It catalyses the reaction UDP-N-acetyl-alpha-D-muramoyl-L-alanyl-gamma-D-glutamyl-meso-2,6-diaminopimeloyl-D-alanyl-D-alanine + di-trans,octa-cis-undecaprenyl phosphate = di-trans,octa-cis-undecaprenyl diphospho-N-acetyl-alpha-D-muramoyl-L-alanyl-D-glutamyl-meso-2,6-diaminopimeloyl-D-alanyl-D-alanine + UMP. It functions in the pathway cell wall biogenesis; peptidoglycan biosynthesis. Functionally, catalyzes the initial step of the lipid cycle reactions in the biosynthesis of the cell wall peptidoglycan: transfers peptidoglycan precursor phospho-MurNAc-pentapeptide from UDP-MurNAc-pentapeptide onto the lipid carrier undecaprenyl phosphate, yielding undecaprenyl-pyrophosphoryl-MurNAc-pentapeptide, known as lipid I. This is Phospho-N-acetylmuramoyl-pentapeptide-transferase from Vibrio cholerae serotype O1 (strain M66-2).